The chain runs to 140 residues: MAQMYLAVTIIALLAISHGVSAKRGCSAFGHSCFGGHGKRSGDTSAMDQLSNQDGVLMARHQLGQEETPPHPVYPHSGYNVLASGDDIIPIRDGGVYDREDGGAAREVMKMKLRNIFKHWMDNYRRSQQNPDDGYYIESL.

A signal peptide spans 1–22 (MAQMYLAVTIIALLAISHGVSA). Cys-26 and Cys-33 are oxidised to a cystine. His-37 carries the post-translational modification Histidine amide. Residues 41-140 (SGDTSAMDQL…PDDGYYIESL (100 aa)) constitute a propeptide that is removed on maturation.

As to expression, expressed in corpora cardiaca (CC), corpora allata (CA), antennal lobe (AL) and gnathal ganglion (GNG) (at protein level). Expression detected in few animals (at protein level).

The protein localises to the secreted. Functionally, ligand for the CCHamide-2 receptor CCHa2-R. This Agrotis ipsilon (Black cutworm moth) protein is Neuropeptide CCHamide-2.